We begin with the raw amino-acid sequence, 569 residues long: Undecaprenyl phosphate-alpha-4-amino-4-deoxy-L-arabinose arabinosyl transferase 1 (569 aa).

Helical transmembrane passes span 27–47 (GLIL…GLWI), 98–120 (LFGV…YLLA), 129–149 (INAA…QAGY), 151–171 (NLDP…WFAI), 194–214 (LMTK…PYML), 225–245 (YGLV…LAVH), 275–295 (PWWF…LLLP), 311–331 (AYLA…SGKL), 334–354 (YIMP…VKWL), 366–386 (GVFN…LQAT), 396–416 (FSLS…ALQV), and 420–440 (LTLW…LPAA).

This sequence belongs to the glycosyltransferase 83 family.

The protein localises to the cell inner membrane. The enzyme catalyses 4-amino-4-deoxy-alpha-L-arabinopyranosyl di-trans,octa-cis-undecaprenyl phosphate + lipid IVA = lipid IIA + di-trans,octa-cis-undecaprenyl phosphate.. It functions in the pathway lipopolysaccharide metabolism; 4-amino-4-deoxy-beta-L-arabinose-lipid A biosynthesis. Functionally, catalyzes the transfer of the L-Ara4N moiety of the glycolipid undecaprenyl phosphate-alpha-L-Ara4N to lipid A. The modified arabinose is attached to lipid A and is required for resistance to polymyxin and cationic antimicrobial peptides. The protein is Undecaprenyl phosphate-alpha-4-amino-4-deoxy-L-arabinose arabinosyl transferase 1 of Pseudomonas fluorescens (strain Pf0-1).